The sequence spans 52 residues: uncharacterized protein (52 aa).

This is an uncharacterized protein from Escherichia coli.